The following is a 184-amino-acid chain: Ribosome-recycling factor (184 aa).

This sequence belongs to the RRF family.

The protein resides in the cytoplasm. Functionally, responsible for the release of ribosomes from messenger RNA at the termination of protein biosynthesis. May increase the efficiency of translation by recycling ribosomes from one round of translation to another. This chain is Ribosome-recycling factor, found in Cutibacterium acnes (strain DSM 16379 / KPA171202) (Propionibacterium acnes).